The chain runs to 273 residues: Bifunctional protein FolD (273 aa).

NADP(+) contacts are provided by residues 155–157 (GRS), Ser182, and Ile223.

It belongs to the tetrahydrofolate dehydrogenase/cyclohydrolase family. In terms of assembly, homodimer.

The catalysed reaction is (6R)-5,10-methylene-5,6,7,8-tetrahydrofolate + NADP(+) = (6R)-5,10-methenyltetrahydrofolate + NADPH. The enzyme catalyses (6R)-5,10-methenyltetrahydrofolate + H2O = (6R)-10-formyltetrahydrofolate + H(+). It participates in one-carbon metabolism; tetrahydrofolate interconversion. Catalyzes the oxidation of 5,10-methylenetetrahydrofolate to 5,10-methenyltetrahydrofolate and then the hydrolysis of 5,10-methenyltetrahydrofolate to 10-formyltetrahydrofolate. The protein is Bifunctional protein FolD of Pseudothermotoga lettingae (strain ATCC BAA-301 / DSM 14385 / NBRC 107922 / TMO) (Thermotoga lettingae).